The primary structure comprises 156 residues: Endoribonuclease YbeY (156 aa).

The Zn(2+) site is built by His-119, His-123, and His-129.

Belongs to the endoribonuclease YbeY family. The cofactor is Zn(2+).

It is found in the cytoplasm. Its function is as follows. Single strand-specific metallo-endoribonuclease involved in late-stage 70S ribosome quality control and in maturation of the 3' terminus of the 16S rRNA. This chain is Endoribonuclease YbeY, found in Buchnera aphidicola subsp. Cinara cedri (strain Cc).